Reading from the N-terminus, the 437-residue chain is Adenylosuccinate synthetase (437 aa).

GTP is bound by residues 12 to 18 (GDEGKGK) and 40 to 42 (GHT). D13 serves as the catalytic Proton acceptor. Residues D13 and G40 each contribute to the Mg(2+) site. IMP is bound by residues 13–16 (DEGK), 38–41 (NAGH), T128, R142, Q223, T238, and R302. H41 serves as the catalytic Proton donor. The tract at residues 119–138 (QRGERRIGTTGRGIGPTYAD) is disordered. 298–304 (TTTGRRR) lines the substrate pocket. GTP is bound by residues R304, 330–332 (KLD), and 412–414 (SLG).

The protein belongs to the adenylosuccinate synthetase family. As to quaternary structure, homodimer. The cofactor is Mg(2+).

Its subcellular location is the cytoplasm. The enzyme catalyses IMP + L-aspartate + GTP = N(6)-(1,2-dicarboxyethyl)-AMP + GDP + phosphate + 2 H(+). It participates in purine metabolism; AMP biosynthesis via de novo pathway; AMP from IMP: step 1/2. Plays an important role in the de novo pathway of purine nucleotide biosynthesis. Catalyzes the first committed step in the biosynthesis of AMP from IMP. This is Adenylosuccinate synthetase from Synechococcus sp. (strain WH7803).